A 166-amino-acid polypeptide reads, in one-letter code: Putative tRNA (cytidine(34)-2'-O)-methyltransferase (166 aa).

S-adenosyl-L-methionine contacts are provided by L83, G109, I130, and S138.

This sequence belongs to the class IV-like SAM-binding methyltransferase superfamily. RNA methyltransferase TrmH family. TrmL subfamily.

Its subcellular location is the cytoplasm. It carries out the reaction cytidine(34) in tRNA + S-adenosyl-L-methionine = 2'-O-methylcytidine(34) in tRNA + S-adenosyl-L-homocysteine + H(+). The catalysed reaction is 5-carboxymethylaminomethyluridine(34) in tRNA(Leu) + S-adenosyl-L-methionine = 5-carboxymethylaminomethyl-2'-O-methyluridine(34) in tRNA(Leu) + S-adenosyl-L-homocysteine + H(+). Its function is as follows. Could methylate the ribose at the nucleotide 34 wobble position in tRNA. This is Putative tRNA (cytidine(34)-2'-O)-methyltransferase from Mycoplasma genitalium (strain ATCC 33530 / DSM 19775 / NCTC 10195 / G37) (Mycoplasmoides genitalium).